Consider the following 674-residue polypeptide: Methionine--tRNA ligase (674 aa).

A 'HIGH' region motif is present at residues 11–21 (PYANGDLHLGH). C142, C145, C155, and C158 together coordinate Zn(2+). Residues 330 to 334 (KMSKS) carry the 'KMSKS' region motif. K333 serves as a coordination point for ATP. One can recognise a tRNA-binding domain in the interval 574 to 674 (DFMKVDLRIA…EGAQPGMRVK (101 aa)).

The protein belongs to the class-I aminoacyl-tRNA synthetase family. MetG type 1 subfamily. Homodimer. Zn(2+) serves as cofactor.

Its subcellular location is the cytoplasm. The catalysed reaction is tRNA(Met) + L-methionine + ATP = L-methionyl-tRNA(Met) + AMP + diphosphate. Its function is as follows. Is required not only for elongation of protein synthesis but also for the initiation of all mRNA translation through initiator tRNA(fMet) aminoacylation. This Francisella tularensis subsp. tularensis (strain FSC 198) protein is Methionine--tRNA ligase.